The chain runs to 388 residues: Chorismate synthase (388 aa).

Residues Arg39 and Arg45 each coordinate NADP(+). FMN-binding positions include 130 to 132 (RSS), 251 to 252 (NA), Gly296, 311 to 315 (KPIPT), and Arg337.

The protein belongs to the chorismate synthase family. As to quaternary structure, homotetramer. Requires FMNH2 as cofactor.

It carries out the reaction 5-O-(1-carboxyvinyl)-3-phosphoshikimate = chorismate + phosphate. It participates in metabolic intermediate biosynthesis; chorismate biosynthesis; chorismate from D-erythrose 4-phosphate and phosphoenolpyruvate: step 7/7. Catalyzes the anti-1,4-elimination of the C-3 phosphate and the C-6 proR hydrogen from 5-enolpyruvylshikimate-3-phosphate (EPSP) to yield chorismate, which is the branch point compound that serves as the starting substrate for the three terminal pathways of aromatic amino acid biosynthesis. This reaction introduces a second double bond into the aromatic ring system. In Streptococcus agalactiae serotype Ia (strain ATCC 27591 / A909 / CDC SS700), this protein is Chorismate synthase.